We begin with the raw amino-acid sequence, 346 residues long: Phosphoribosylformylglycinamidine cyclo-ligase (346 aa).

It belongs to the AIR synthase family.

The protein localises to the cytoplasm. The catalysed reaction is 2-formamido-N(1)-(5-O-phospho-beta-D-ribosyl)acetamidine + ATP = 5-amino-1-(5-phospho-beta-D-ribosyl)imidazole + ADP + phosphate + H(+). Its pathway is purine metabolism; IMP biosynthesis via de novo pathway; 5-amino-1-(5-phospho-D-ribosyl)imidazole from N(2)-formyl-N(1)-(5-phospho-D-ribosyl)glycinamide: step 2/2. The polypeptide is Phosphoribosylformylglycinamidine cyclo-ligase (Shewanella piezotolerans (strain WP3 / JCM 13877)).